A 340-amino-acid polypeptide reads, in one-letter code: GTP-binding protein REM 2 (340 aa).

Residues 1-13 (MHTDLDTDMDMDT) show a composition bias toward acidic residues. The interval 1–107 (MHTDLDTDMD…SDSLGSGEAA (107 aa)) is disordered. At S27 the chain carries Phosphoserine. A compositionally biased stretch (basic and acidic residues) spans 40 to 53 (LLKKSEKLLAELDR). Residues 93 to 104 (SSSGSSDSLGSG) show a composition bias toward low complexity. GTP contacts are provided by residues 121–128 (GESGVGKS), 229–232 (NKSD), and 260–261 (AA). Residues 283 to 308 (RNHAGGQRPDPGSPEGPAPPARRESL) form a disordered region. A compositionally biased stretch (pro residues) spans 293–302 (PGSPEGPAPP). The residue at position 295 (S295) is a Phosphoserine.

It belongs to the small GTPase superfamily. RGK family.

Its subcellular location is the cell membrane. Its function is as follows. Binds GTP saturably and exhibits a low intrinsic rate of GTP hydrolysis. The chain is GTP-binding protein REM 2 (REM2) from Homo sapiens (Human).